The sequence spans 478 residues: Cysteine--tRNA ligase (478 aa).

Cysteine 27 provides a ligand contact to Zn(2+). A 'HIGH' region motif is present at residues 29–39 (PTTYNFIHLGN). 3 residues coordinate Zn(2+): cysteine 207, histidine 232, and glutamate 236. The short motif at 264–268 (KMSKS) is the 'KMSKS' region element. Lysine 267 serves as a coordination point for ATP.

This sequence belongs to the class-I aminoacyl-tRNA synthetase family. As to quaternary structure, monomer. Zn(2+) serves as cofactor.

The protein localises to the cytoplasm. The catalysed reaction is tRNA(Cys) + L-cysteine + ATP = L-cysteinyl-tRNA(Cys) + AMP + diphosphate. The polypeptide is Cysteine--tRNA ligase (Desulforudis audaxviator (strain MP104C)).